Consider the following 265-residue polypeptide: Exosome complex component Rrp4 (265 aa).

In terms of domain architecture, S1 motif spans 65 to 137; it reads GDNVIGKIVD…EVNNIDLTTK (73 aa). Residues 147–205 enclose the KH domain; that stretch reads KGGQIVKITPSRVPRVIGRGGSMINMIKKLTMTRIIVGQNGWIWVNGKNEALEKLAIEA. Residues 241 to 254 are compositionally biased toward acidic residues; that stretch reads EIPELEEEPQEETE. Residues 241–265 form a disordered region; sequence EIPELEEEPQEETEVNNNDGETRRT.

The protein belongs to the RRP4 family. As to quaternary structure, component of the archaeal exosome complex. Forms a trimer of Rrp4 and/or Csl4 subunits. The trimer associates with a hexameric ring-like arrangement composed of 3 Rrp41-Rrp42 heterodimers.

Its subcellular location is the cytoplasm. In terms of biological role, non-catalytic component of the exosome, which is a complex involved in RNA degradation. Increases the RNA binding and the efficiency of RNA degradation. Confers strong poly(A) specificity to the exosome. This is Exosome complex component Rrp4 from Pyrococcus horikoshii (strain ATCC 700860 / DSM 12428 / JCM 9974 / NBRC 100139 / OT-3).